A 310-amino-acid polypeptide reads, in one-letter code: M1-specific T cell receptor beta chain (310 aa).

Residues 1–21 form the signal peptide; it reads MSNQVLCCVVLCLLGANTVDG. The t cell receptor beta variable 19 stretch occupies residues 22-114; the sequence is GITQSPKYLF…TAFYLCASSI (93 aa). One can recognise an Ig-like V-type domain in the interval 34 to 131; it reads EGQNVTLSCE…FGPGTRLTVT (98 aa). The N-linked (GlcNAc...) asparagine glycan is linked to N37. The cysteines at positions 42 and 110 are disulfide-linked. The segment at 46-50 is CDR1; sequence LNHDA. A peptide antigen is bound at residue D49. The CDR2 stretch occupies residues 68–73; the sequence is SQIVND. Positions 110–122 are CDR3; that stretch reads CASSIRSSYEQYF. Residues 117 to 131 form a t cell receptor beta joining 2-7 region; the sequence is SYEQYFGPGTRLTVT. The interval 133–310 is t cell receptor beta constant 2; it reads DLKNVFPPKV…AMVKRKDSRG (178 aa). The Ig-like C1-type domain maps to 140 to 249; the sequence is PKVAVFEPSE…WTQDRAKPVT (110 aa). Cysteines 162 and 227 form a disulfide. A glycan (N-linked (GlcNAc...) asparagine) is linked at N201. The interval 262-276 is connecting peptide; it reads CGFTSESYQQGVLSA. A helical transmembrane segment spans residues 277–299; sequence TILYEILLGKATLYAVLVSALVL. Over 300 to 310 the chain is Cytoplasmic; the sequence is MAMVKRKDSRG.

In terms of assembly, disulfide-linked heterodimer with TRAV27*01J42*01C*01 alpha chain. The TR primarily interacts via its CDR3-beta domain with M/matrix protein 1-derived peptide (GILGFVFTL) displayed by HLA-A*02.01 in a 'peg-notch' recognition mode. The alpha-beta TR associates with the transmembrane signaling CD3 coreceptor proteins to form the TR-CD3 (TCR). The assembly of alpha-beta TR heterodimers with CD3 occurs in the endoplasmic reticulum where a single alpha-beta TR heterodimer associates with one CD3D-CD3E heterodimer, one CD3G-CD3E heterodimer and one CD247 homodimer forming a stable octameric structure. CD3D-CD3E and CD3G-CD3E heterodimers preferentially associate with TR alpha and TR beta chains (via TM domain), respectively. The association of the CD247 homodimer is the last step of TCR assembly in the endoplasmic reticulum and is required for transport to the cell surface. As to expression, expressed in M/matrix protein 1-specific effector memory CD8-positive T cells readily detectable in the peripheral blood, secondary lymphoid organs and lung (primary site of infection) of IAV infected individuals.

The protein localises to the cell membrane. The beta chain of TRAV27*01J42*01C*01/TRBV19*01J2S7*01C*02 alpha-beta T cell receptor (TR) clonotype that is specific for HLA-A*02:01-restricted M/matrix protein 1 immunodominant epitope GILGFVFTL of influenza A virus (IAV). Classified as a public TCR clonotype, it is preferentially selected in effector memory CD8-positive T cells among multiple HLA-A*02:01 carriers/individuals and confers long-lived immunity against IAV infection. Can cross-recognize sporadically emerging IAV variants by molecular mimicry, inducing immunity toward different influenza strains. Antigen recognition initiates TR-CD3 clustering on the cell surface and intracellular activation of LCK that phosphorylates the ITAM motifs of CD3G, CD3D, CD3E and CD247 enabling the recruitment of ZAP70. In turn, ZAP70 phosphorylates LAT, which recruits numerous signaling molecules to form the LAT signalosome. The LAT signalosome propagates signal branching to three major signaling pathways, the calcium, the mitogen-activated protein kinase (MAPK) kinase and the nuclear factor NF-kappa-B (NF-kB) pathways, leading to the mobilization of transcription factors that are critical for gene expression and essential for T cell differentiation into effector/memory T cells. The chain is M1-specific T cell receptor beta chain from Homo sapiens (Human).